We begin with the raw amino-acid sequence, 152 residues long: Transcriptional regulator MraZ (152 aa).

SpoVT-AbrB domains lie at 5-52 and 81-124; these read ATLV…PLPE and ASEC…DEQT.

This sequence belongs to the MraZ family. In terms of assembly, forms oligomers.

The protein localises to the cytoplasm. It localises to the nucleoid. Functionally, negatively regulates its own expression and that of the subsequent genes in the proximal part of the division and cell wall (dcw) gene cluster. Acts by binding directly to DNA. May also regulate the expression of genes outside the dcw cluster. This Pectobacterium carotovorum subsp. carotovorum (strain PC1) protein is Transcriptional regulator MraZ.